The following is a 140-amino-acid chain: Mediator of RNA polymerase II transcription subunit 21 (140 aa).

Positions 52 to 130 (EERERTLEEL…CDELILKLAQ (79 aa)) form a coiled coil.

This sequence belongs to the Mediator complex subunit 21 family. Component of the Mediator complex.

The protein resides in the nucleus. Component of the Mediator complex, a coactivator involved in the regulated transcription of nearly all RNA polymerase II-dependent genes. Mediator functions as a bridge to convey information from gene-specific regulatory proteins to the basal RNA polymerase II transcription machinery. Mediator is recruited to promoters by direct interactions with regulatory proteins and serves as a scaffold for the assembly of a functional preinitiation complex with RNA polymerase II and the general transcription factors. The sequence is that of Mediator of RNA polymerase II transcription subunit 21 (SRB7) from Yarrowia lipolytica (strain CLIB 122 / E 150) (Yeast).